The chain runs to 173 residues: Shikimate kinase (173 aa).

Position 10–15 (10–15 (GSGKTT)) interacts with ATP. Thr14 contributes to the Mg(2+) binding site. Residues Asp32, Arg56, and Gly78 each coordinate substrate. An ATP-binding site is contributed by Arg117. Arg135 lines the substrate pocket.

Belongs to the shikimate kinase family. Monomer. Requires Mg(2+) as cofactor.

Its subcellular location is the cytoplasm. It catalyses the reaction shikimate + ATP = 3-phosphoshikimate + ADP + H(+). It functions in the pathway metabolic intermediate biosynthesis; chorismate biosynthesis; chorismate from D-erythrose 4-phosphate and phosphoenolpyruvate: step 5/7. Its function is as follows. Catalyzes the specific phosphorylation of the 3-hydroxyl group of shikimic acid using ATP as a cosubstrate. This is Shikimate kinase from Limosilactobacillus fermentum (strain NBRC 3956 / LMG 18251) (Lactobacillus fermentum).